We begin with the raw amino-acid sequence, 238 residues long: Gem-associated protein 8 (238 aa).

Residues 66 to 127 form a disordered region; that stretch reads AGHPWDSQGQ…LESDSDDEVE (62 aa). Polar residues-rich tracts occupy residues 72 to 82 and 96 to 108; these read SQGQHMAQQES and LRNS…STRG. Positions 113-127 are enriched in acidic residues; that stretch reads CEEEELESDSDDEVE. Position 122 is a phosphoserine (serine 122). The stretch at 131 to 164 forms a coiled coil; that stretch reads SNMEITEELRQYFAQTERHREERRRQQQLDAERL.

In terms of assembly, part of the core SMN complex that contains SMN1, GEMIN2/SIP1, DDX20/GEMIN3, GEMIN4, GEMIN5, GEMIN6, GEMIN7, GEMIN8 and STRAP/UNRIP. Part of the SMN-Sm complex that contains SMN1, GEMIN2/SIP1, DDX20/GEMIN3, GEMIN4, GEMIN5, GEMIN6, GEMIN7, GEMIN8, STRAP/UNRIP and the Sm proteins SNRPB, SNRPD1, SNRPD2, SNRPD3, SNRPE, SNRPF and SNRPG. Interacts with GEMIN6; the interaction is direct. Interacts with GEMIN7; the interaction is direct. Interacts with SMN1; the interaction is direct. Interacts with GEMIN4; the interaction is direct. In terms of tissue distribution, widely expressed in embryonic tissues (at protein level).

It localises to the nucleus. The protein localises to the gem. Its subcellular location is the cytoplasm. Functionally, the SMN complex catalyzes the assembly of small nuclear ribonucleoproteins (snRNPs), the building blocks of the spliceosome, and thereby plays an important role in the splicing of cellular pre-mRNAs. Most spliceosomal snRNPs contain a common set of Sm proteins SNRPB, SNRPD1, SNRPD2, SNRPD3, SNRPE, SNRPF and SNRPG that assemble in a heptameric protein ring on the Sm site of the small nuclear RNA to form the core snRNP (Sm core). In the cytosol, the Sm proteins SNRPD1, SNRPD2, SNRPE, SNRPF and SNRPG are trapped in an inactive 6S pICln-Sm complex by the chaperone CLNS1A that controls the assembly of the core snRNP. To assemble core snRNPs, the SMN complex accepts the trapped 5Sm proteins from CLNS1A forming an intermediate. Binding of snRNA inside 5Sm triggers eviction of the SMN complex, thereby allowing binding of SNRPD3 and SNRPB to complete assembly of the core snRNP. The protein is Gem-associated protein 8 (Gemin8) of Mus musculus (Mouse).